The following is a 428-amino-acid chain: Adenylosuccinate synthetase (428 aa).

Residues 13–19 (GDEGKGK) and 41–43 (GHT) contribute to the GTP site. The active-site Proton acceptor is the D14. Mg(2+) is bound by residues D14 and G41. IMP contacts are provided by residues 14-17 (DEGK), 39-42 (NAGH), T130, R144, Q223, T238, and R302. The active-site Proton donor is H42. 298–304 (ASTGRRR) is a binding site for substrate. GTP is bound by residues R304, 330 to 332 (KLD), and 412 to 414 (STG).

Belongs to the adenylosuccinate synthetase family. In terms of assembly, homodimer. Mg(2+) serves as cofactor.

Its subcellular location is the cytoplasm. It catalyses the reaction IMP + L-aspartate + GTP = N(6)-(1,2-dicarboxyethyl)-AMP + GDP + phosphate + 2 H(+). Its pathway is purine metabolism; AMP biosynthesis via de novo pathway; AMP from IMP: step 1/2. Its function is as follows. Plays an important role in the de novo pathway of purine nucleotide biosynthesis. Catalyzes the first committed step in the biosynthesis of AMP from IMP. The sequence is that of Adenylosuccinate synthetase from Dichelobacter nodosus (strain VCS1703A).